We begin with the raw amino-acid sequence, 87 residues long: uncharacterized protein (87 aa).

The 84-residue stretch at 4 to 87 (SKIIILNNNK…TISGSILIKI (84 aa)) folds into the 2Fe-2S ferredoxin-type domain. [2Fe-2S] cluster-binding residues include Cys-39, Cys-44, Cys-47, and Cys-75.

[2Fe-2S] cluster is required as a cofactor.

This is an uncharacterized protein from Buchnera aphidicola subsp. Baizongia pistaciae (strain Bp).